The primary structure comprises 125 residues: Large ribosomal subunit protein bL12 (125 aa).

This sequence belongs to the bacterial ribosomal protein bL12 family. As to quaternary structure, homodimer. Part of the ribosomal stalk of the 50S ribosomal subunit. Forms a multimeric L10(L12)X complex, where L10 forms an elongated spine to which 2 to 4 L12 dimers bind in a sequential fashion. Binds GTP-bound translation factors.

Forms part of the ribosomal stalk which helps the ribosome interact with GTP-bound translation factors. Is thus essential for accurate translation. The protein is Large ribosomal subunit protein bL12 of Ruthia magnifica subsp. Calyptogena magnifica.